The sequence spans 418 residues: Trans-acting enoyl reductase (418 aa).

Belongs to the saccharopine dehydrogenase family. Enoyl reductase subfamily.

Involved in the reduction of the double bond between C-4 and C-5 during phthiocerol dimycocerosates (DIM A) and glycosylated phenolphthiocerol dimycocerosates (PGL) biosynthesis. The chain is Trans-acting enoyl reductase from Mycobacterium tuberculosis (strain ATCC 25177 / H37Ra).